Here is a 668-residue protein sequence, read N- to C-terminus: Threonine--tRNA ligase (668 aa).

Residues 1–64 (MSEAIFLTFP…ADGKIEIITR (64 aa)) form the TGS domain. Residues 245 to 553 (DHRKLGREMD…LIENFAGHLP (309 aa)) form a catalytic region. Zn(2+) contacts are provided by Cys-347, His-398, and His-530.

The protein belongs to the class-II aminoacyl-tRNA synthetase family. As to quaternary structure, homodimer. It depends on Zn(2+) as a cofactor.

The protein localises to the cytoplasm. It catalyses the reaction tRNA(Thr) + L-threonine + ATP = L-threonyl-tRNA(Thr) + AMP + diphosphate + H(+). Functionally, catalyzes the attachment of threonine to tRNA(Thr) in a two-step reaction: L-threonine is first activated by ATP to form Thr-AMP and then transferred to the acceptor end of tRNA(Thr). Also edits incorrectly charged L-seryl-tRNA(Thr). In Rhizobium leguminosarum bv. trifolii (strain WSM2304), this protein is Threonine--tRNA ligase.